Reading from the N-terminus, the 505-residue chain is Deoxyguanosinetriphosphate triphosphohydrolase (505 aa).

The 208-residue stretch at 66–273 (RLTHSMEVQQ…MEAADDISYC (208 aa)) folds into the HD domain.

The protein belongs to the dGTPase family. Type 1 subfamily. Homotetramer. Mg(2+) serves as cofactor.

It carries out the reaction dGTP + H2O = 2'-deoxyguanosine + triphosphate + H(+). DGTPase preferentially hydrolyzes dGTP over the other canonical NTPs. The sequence is that of Deoxyguanosinetriphosphate triphosphohydrolase from Escherichia coli O157:H7.